Consider the following 159-residue polypeptide: ATP synthase subunit b', chloroplastic (159 aa).

Residues 30–47 (LMALQFLALTIILNLIYY) traverse the membrane as a helical segment.

Belongs to the ATPase B chain family. As to quaternary structure, F-type ATPases have 2 components, F(1) - the catalytic core - and F(0) - the membrane proton channel. F(1) has five subunits: alpha(3), beta(3), gamma(1), delta(1), epsilon(1). F(0) has four main subunits: a(1), b(1), b'(1) and c(10-14). The alpha and beta chains form an alternating ring which encloses part of the gamma chain. F(1) is attached to F(0) by a central stalk formed by the gamma and epsilon chains, while a peripheral stalk is formed by the delta, b and b' chains.

The protein localises to the plastid. It is found in the chloroplast thylakoid membrane. F(1)F(0) ATP synthase produces ATP from ADP in the presence of a proton or sodium gradient. F-type ATPases consist of two structural domains, F(1) containing the extramembraneous catalytic core and F(0) containing the membrane proton channel, linked together by a central stalk and a peripheral stalk. During catalysis, ATP synthesis in the catalytic domain of F(1) is coupled via a rotary mechanism of the central stalk subunits to proton translocation. Functionally, component of the F(0) channel, it forms part of the peripheral stalk, linking F(1) to F(0). The b'-subunit is a diverged and duplicated form of b found in plants and photosynthetic bacteria. In Antithamnion sp. (Red alga), this protein is ATP synthase subunit b', chloroplastic.